The chain runs to 199 residues: Recombination protein RecR (199 aa).

The segment at 58–73 adopts a C4-type zinc-finger fold; sequence CKKCFNLTSEDECEIC. The region spanning 81–175 is the Toprim domain; that stretch reads KLICVVAETK…KVTRIAYGLP (95 aa).

Belongs to the RecR family.

May play a role in DNA repair. It seems to be involved in an RecBC-independent recombinational process of DNA repair. It may act with RecF and RecO. This is Recombination protein RecR from Prochlorococcus marinus (strain MIT 9301).